The primary structure comprises 535 residues: Endogenous retrovirus group V member 2 Env polyprotein (535 aa).

A signal peptide spans 1-21 (MTEKFLFLYLSLLPMPLLSQA). Over 22–321 (QWNENSLVSF…NTTQPRQKRA (300 aa)) the chain is Extracellular. A glycan (N-linked (GlcNAc...) asparagine) is linked at Asn68. The chain crosses the membrane as a helical span at residues 322–342 (LGLILAGMGAAIGMIAPWGGF). The Cytoplasmic segment spans residues 343–456 (TYHDVTLRNL…VKSALPSLNW (114 aa)). A helical transmembrane segment spans residues 457-477 (FVPLLGPATVILLLFLFGPCF). The Extracellular segment spans residues 478-535 (FNLLIKCVSSRIKQFHMKSPQMERYQLSVIGGPSTYKHISPLDASGQRFRETMEEFSL).

It belongs to the gamma type-C retroviral envelope protein family. As to expression, expressed in placenta.

It localises to the membrane. This is Endogenous retrovirus group V member 2 Env polyprotein (ERVV-2) from Homo sapiens (Human).